We begin with the raw amino-acid sequence, 213 residues long: MSDNLYTYGVIEQEDIELEIDGVAGAERVYTVDYRTLSAVVSDIDTTDPERTDEDVQVHNTVLQHVLEYDGGRTVVPMSFGMAFKNGRTLKGVMRGARRALRSALNDIEGTVELGVKIITSSEGGVSHDAIRADIGDRLSELSINETENDLFSDRLVVNKSYLVARDRRDDFDAAIDTIEEEYGDELTVQYTGPWAPYNFVDIHIGADQQRGR.

It belongs to the gas vesicle GvpF/GvpL family. Binds GvpA.

The protein resides in the gas vesicle. Its function is as follows. A minor component of the gas vesicle, may be involved in preventing GvpA aggregation during gas vesicle nucleation. Gas vesicles are hollow, gas filled proteinaceous nanostructures found in some microorganisms. They allow positioning of halobacteria at the optimal depth for growth in the poorly aerated, shallow brine pools of their habitat. Expression of a 9.5 kb mc-vac DNA fragment containing 2 divergently transcribed regions (gvpD-gvpE-gvpF-gvpG-gvpH-gvpI-gvpJ-gvpK-gvpL-gvpM and gvpA-gvpC-gvpN-gvpO) allows H.volcanii to produce gas vesicles. This is Gas vesicle protein F from Haloferax mediterranei (strain ATCC 33500 / DSM 1411 / JCM 8866 / NBRC 14739 / NCIMB 2177 / R-4) (Halobacterium mediterranei).